Reading from the N-terminus, the 209-residue chain is Imidazole glycerol phosphate synthase subunit HisH (209 aa).

Positions 1–205 constitute a Glutamine amidotransferase type-1 domain; sequence MIAIIDYGMG…QGVVEAWKSS (205 aa). The active-site Nucleophile is Cys-79. Catalysis depends on residues His-180 and Glu-182.

In terms of assembly, heterodimer of HisH and HisF.

The protein resides in the cytoplasm. It catalyses the reaction 5-[(5-phospho-1-deoxy-D-ribulos-1-ylimino)methylamino]-1-(5-phospho-beta-D-ribosyl)imidazole-4-carboxamide + L-glutamine = D-erythro-1-(imidazol-4-yl)glycerol 3-phosphate + 5-amino-1-(5-phospho-beta-D-ribosyl)imidazole-4-carboxamide + L-glutamate + H(+). It carries out the reaction L-glutamine + H2O = L-glutamate + NH4(+). It participates in amino-acid biosynthesis; L-histidine biosynthesis; L-histidine from 5-phospho-alpha-D-ribose 1-diphosphate: step 5/9. IGPS catalyzes the conversion of PRFAR and glutamine to IGP, AICAR and glutamate. The HisH subunit catalyzes the hydrolysis of glutamine to glutamate and ammonia as part of the synthesis of IGP and AICAR. The resulting ammonia molecule is channeled to the active site of HisF. The sequence is that of Imidazole glycerol phosphate synthase subunit HisH from Bacillus cereus (strain ATCC 14579 / DSM 31 / CCUG 7414 / JCM 2152 / NBRC 15305 / NCIMB 9373 / NCTC 2599 / NRRL B-3711).